The chain runs to 308 residues: MSSPKKIVIASRESQLALWQANFIRGRLLELYPQTDITILGMTTKGDQILDVSLSKIGGKGLFIKELELALEDGRADIAVHSMKDVPMIVPSGFTLAAITEREDPRDAFVSNDFSSLEELPAGSVVGTSSLRRESQLRARFPHLQVRPLRGNVQTRLRKLDEGEYSAIILAAAGLKRLELGYRISMLLPPELSLPAVGQGALGIECRDNDPDMVEWMKPLHHAATACCVEAERAMSRMLGGSCQVPLGGFAEIFEDVLTLRGFVATPDGSRMIADKLCGKPESGEQVGQQLAQNLKAHGAEEILAALA.

The residue at position 243 (C243) is an S-(dipyrrolylmethanemethyl)cysteine.

Belongs to the HMBS family. As to quaternary structure, monomer. Dipyrromethane is required as a cofactor.

The catalysed reaction is 4 porphobilinogen + H2O = hydroxymethylbilane + 4 NH4(+). Its pathway is porphyrin-containing compound metabolism; protoporphyrin-IX biosynthesis; coproporphyrinogen-III from 5-aminolevulinate: step 2/4. In terms of biological role, tetrapolymerization of the monopyrrole PBG into the hydroxymethylbilane pre-uroporphyrinogen in several discrete steps. This chain is Porphobilinogen deaminase, found in Nitrosomonas europaea (strain ATCC 19718 / CIP 103999 / KCTC 2705 / NBRC 14298).